The sequence spans 178 residues: Ribosome maturation factor RimP (178 aa).

Belongs to the RimP family.

The protein resides in the cytoplasm. In terms of biological role, required for maturation of 30S ribosomal subunits. The protein is Ribosome maturation factor RimP of Mycolicibacterium gilvum (strain PYR-GCK) (Mycobacterium gilvum (strain PYR-GCK)).